The following is a 262-amino-acid chain: Thioredoxin-like protein HCF164, chloroplastic (262 aa).

A chloroplast-targeting transit peptide spans 1-54 (MAVVASRCTGLLLPDLGASLAGFRRRRSTPASSLSFRPRRARRRLGSLSCIAPP). The disordered stretch occupies residues 47–90 (SLSCIAPPDSAEPQTDEPAAKDDSTEDKAEASSASQDAGNPTFP). Residues 64-76 (PAAKDDSTEDKAE) are compositionally biased toward basic and acidic residues. Residues 78–89 (SSASQDAGNPTF) show a composition bias toward polar residues. Residues 78–230 (SSASQDAGNP…FLDNVVALAS (153 aa)) form the Thioredoxin domain. Residues cysteine 151 and cysteine 154 each act as nucleophile in the active site. Cysteines 151 and 154 form a disulfide.

Belongs to the thioredoxin family.

The protein localises to the plastid. Its subcellular location is the chloroplast. Its function is as follows. Probable thiol-disulfide oxidoreductase that may participate in various redox reactions in the chloroplast. The polypeptide is Thioredoxin-like protein HCF164, chloroplastic (Oryza sativa subsp. japonica (Rice)).